Here is a 457-residue protein sequence, read N- to C-terminus: uncharacterized protein (457 aa).

The 59-residue stretch at 5–63 (PVKKNDVIEVEIIDLTHEGLGVAKVDHYPLFIENALPGEKLEIKVLKTGKSFGYGKVLT) folds into the TRAM domain. 4 residues coordinate S-adenosyl-L-methionine: Gln287, Tyr316, Glu337, and Asp385. The active-site Nucleophile is Cys412.

Belongs to the class I-like SAM-binding methyltransferase superfamily. RNA M5U methyltransferase family.

This is an uncharacterized protein from Enterococcus faecalis (strain ATCC 700802 / V583).